A 221-amino-acid polypeptide reads, in one-letter code: MAKNKFNHSWLHDHINDPYVKMAQREGYRARAAYKLKEIDEQDKLIRPGQVIVDLGAAPGSWSQYARNKLADSPRARDGRIDGAVVAIDLLPMEPVADVTFIQGDFREESVFRELESVVLDASGGNKIDLVLSDMAPNLSGVASADAARIEYLCDLALEFAQAHLKPEGALLVKCFHGSGYSQIVEKFKRQFKVVAKRKPKASRDKSSETFILGRYLKTVD.

The S-adenosyl-L-methionine site is built by G60, W62, D89, D105, and D134. Residue K174 is the Proton acceptor of the active site.

Belongs to the class I-like SAM-binding methyltransferase superfamily. RNA methyltransferase RlmE family.

Its subcellular location is the cytoplasm. It carries out the reaction uridine(2552) in 23S rRNA + S-adenosyl-L-methionine = 2'-O-methyluridine(2552) in 23S rRNA + S-adenosyl-L-homocysteine + H(+). In terms of biological role, specifically methylates the uridine in position 2552 of 23S rRNA at the 2'-O position of the ribose in the fully assembled 50S ribosomal subunit. This chain is Ribosomal RNA large subunit methyltransferase E, found in Cupriavidus taiwanensis (strain DSM 17343 / BCRC 17206 / CCUG 44338 / CIP 107171 / LMG 19424 / R1) (Ralstonia taiwanensis (strain LMG 19424)).